The primary structure comprises 181 residues: Aminoglycoside 2'-N-acetyltransferase (181 aa).

The 152-residue stretch at 11–162 (VHTADLDSET…DGTVFVLPID (152 aa)) folds into the N-acetyltransferase domain. Residues Asp35 and 82-83 (EG) contribute to the substrate site. Residues 84–86 (VAV) and 91–96 (RGQRLV) contribute to the CoA site. Residues Ser117 and 151–152 (DD) contribute to the substrate site.

This sequence belongs to the AAC(2')-I acetyltransferase family. Homodimer.

In terms of biological role, catalyzes the coenzyme A-dependent acetylation of the 2' hydroxyl or amino group of a broad spectrum of aminoglycosides. It confers resistance to aminoglycosides. The chain is Aminoglycoside 2'-N-acetyltransferase (aac) from Mycobacterium bovis (strain ATCC BAA-935 / AF2122/97).